The primary structure comprises 155 residues: Endoribonuclease YbeY (155 aa).

Zn(2+) is bound by residues His114, His118, and His124.

This sequence belongs to the endoribonuclease YbeY family. Zn(2+) is required as a cofactor.

The protein resides in the cytoplasm. Functionally, single strand-specific metallo-endoribonuclease involved in late-stage 70S ribosome quality control and in maturation of the 3' terminus of the 16S rRNA. The sequence is that of Endoribonuclease YbeY from Salmonella arizonae (strain ATCC BAA-731 / CDC346-86 / RSK2980).